A 160-amino-acid polypeptide reads, in one-letter code: SsrA-binding protein (160 aa).

This sequence belongs to the SmpB family.

The protein resides in the cytoplasm. Required for rescue of stalled ribosomes mediated by trans-translation. Binds to transfer-messenger RNA (tmRNA), required for stable association of tmRNA with ribosomes. tmRNA and SmpB together mimic tRNA shape, replacing the anticodon stem-loop with SmpB. tmRNA is encoded by the ssrA gene; the 2 termini fold to resemble tRNA(Ala) and it encodes a 'tag peptide', a short internal open reading frame. During trans-translation Ala-aminoacylated tmRNA acts like a tRNA, entering the A-site of stalled ribosomes, displacing the stalled mRNA. The ribosome then switches to translate the ORF on the tmRNA; the nascent peptide is terminated with the 'tag peptide' encoded by the tmRNA and targeted for degradation. The ribosome is freed to recommence translation, which seems to be the essential function of trans-translation. This is SsrA-binding protein from Sodalis glossinidius (strain morsitans).